The sequence spans 439 residues: Innexin-19 (439 aa).

The next 4 membrane-spanning stretches (helical) occupy residues Pro33 to Ile53, Gln103 to Trp123, Ile199 to Leu219, and Val285 to Ile305.

Belongs to the pannexin family.

The protein resides in the cell membrane. It localises to the cell junction. Its subcellular location is the gap junction. In terms of biological role, structural component of the gap junctions that specifically coordinates left-right asymmetry in the developing nervous system. Acts by forming gap junction network linking embryonic neurons and providing electrical coupling between cells, leading to promote or inhibit AWC signaling. The sequence is that of Innexin-19 (inx-19) from Caenorhabditis briggsae.